The following is a 255-amino-acid chain: 3-alpha-(or 20-beta)-hydroxysteroid dehydrogenase (255 aa).

Residue 10-34 (IITGGARGLGAEAARQAVAAGARVV) coordinates NAD(+). Ser-139 contacts substrate. Tyr-152 serves as the catalytic Proton acceptor.

It belongs to the short-chain dehydrogenases/reductases (SDR) family. Homotetramer.

The enzyme catalyses androstan-3alpha,17beta-diol + NAD(+) = 17beta-hydroxyandrostanone + NADH + H(+). It participates in lipid metabolism; C21-steroid hormone metabolism. The polypeptide is 3-alpha-(or 20-beta)-hydroxysteroid dehydrogenase (Streptomyces exfoliatus (Streptomyces hydrogenans)).